The sequence spans 513 residues: ATP synthase subunit alpha (513 aa).

Residue 169–176 (GDRQTGKT) coordinates ATP.

Belongs to the ATPase alpha/beta chains family. F-type ATPases have 2 components, CF(1) - the catalytic core - and CF(0) - the membrane proton channel. CF(1) has five subunits: alpha(3), beta(3), gamma(1), delta(1), epsilon(1). CF(0) has three main subunits: a(1), b(2) and c(9-12). The alpha and beta chains form an alternating ring which encloses part of the gamma chain. CF(1) is attached to CF(0) by a central stalk formed by the gamma and epsilon chains, while a peripheral stalk is formed by the delta and b chains.

It localises to the cell inner membrane. It carries out the reaction ATP + H2O + 4 H(+)(in) = ADP + phosphate + 5 H(+)(out). Produces ATP from ADP in the presence of a proton gradient across the membrane. The alpha chain is a regulatory subunit. The polypeptide is ATP synthase subunit alpha (Pasteurella multocida (strain Pm70)).